An 82-amino-acid polypeptide reads, in one-letter code: U24 protein (82 aa).

The PPXY motif motif lies at 7–10; the sequence is PPSY. A helical transmembrane segment spans residues 52-72; the sequence is FIILACLIISVILCLILILHI.

In terms of assembly, interacts with host ITCH; this interaction probably mediates ITCH degradation. Interacts probably with NEDD4.

It localises to the membrane. Functionally, down-regulates of the TCR/CD3E complex and the transferrin receptor TFRC in host T-cells by blocking them from recycling back to the cell surface. This Homo sapiens (Human) protein is U24 protein.